The following is a 111-amino-acid chain: uncharacterized protein (111 aa).

Positions 12–34 (AWCPSRPPASAPSAPQEAARRGD) are disordered. The interval 71–76 (PNIIIT) is required for interaction with PPP3CA. Residues T79 and T81 each carry the phosphothreonine modification.

As to quaternary structure, interacts (via PxIxIT motif, when phosphorylated on Thr-79) with PPP3CA.

This is an uncharacterized protein from Mus musculus (Mouse).